The sequence spans 224 residues: 7-cyano-7-deazaguanine synthase (224 aa).

An ATP-binding site is contributed by 10-20; that stretch reads LSGGLDSATVV. Zn(2+) is bound by residues Cys-189, Cys-199, Cys-202, and Cys-205.

The protein belongs to the QueC family. The cofactor is Zn(2+).

The catalysed reaction is 7-carboxy-7-deazaguanine + NH4(+) + ATP = 7-cyano-7-deazaguanine + ADP + phosphate + H2O + H(+). Its pathway is purine metabolism; 7-cyano-7-deazaguanine biosynthesis. In terms of biological role, catalyzes the ATP-dependent conversion of 7-carboxy-7-deazaguanine (CDG) to 7-cyano-7-deazaguanine (preQ(0)). The chain is 7-cyano-7-deazaguanine synthase from Pseudomonas putida (strain ATCC 700007 / DSM 6899 / JCM 31910 / BCRC 17059 / LMG 24140 / F1).